A 634-amino-acid polypeptide reads, in one-letter code: uncharacterized protein (634 aa).

An N-terminal signal peptide occupies residues 1-40 (MWLQQRLKGLPGLLSSSWARRLLCLLGLLLLLLWFGGSGA). The Extracellular portion of the chain corresponds to 41 to 589 (RRAAGGLHLL…DEHMAQQDPG (549 aa)). The N-linked (GlcNAc...) asparagine glycan is linked to Asn-363. Residues 590 to 610 (LPFLFWFSVASLITLFHLFLF) traverse the membrane as a helical segment. The Cytoplasmic portion of the chain corresponds to 611-634 (KLIYNEYCGPGAKPLFRSKEDPSV).

It localises to the membrane. This is an uncharacterized protein from Homo sapiens (Human).